The sequence spans 1461 residues: MGQIHGLSPTPIPKAPRGLSTHHWLNFLQAAYRLQPRPSDFDFQQLRRFLKLALKTPIWLNPIDYSLLASLIPKGYPGRVVEIINILVKNQVSPSAPAAPVPTPICPTTTPPPPPPPSPEAHVPPPYVEPTTTQCFPILHPPGAPSAHRPWQMKDLQAIKQEVSSSALGSPQFMQTLRLAVQQFDPTAKDLQDLLQYLCSSLVVSLHHQQLNTLITEAETRGMTGYNPMAGPLRMQANNPAQQGLRREYQNLWLAAFSTLPGNTRDPSWAAILQGLEEPYCAFVERLNVALDNGLPEGTPKEPILRSLAYSNANKECQKILQARGHTNSPLGEMLRTCQAWTPKDKTKVLVVQPRRPPPTQPCFRCGKVGHWSRDCTQPRPPPGPCPLCQDPSHWKRDCPQLKPPQEEGEPLLLDLPSTSGTTEEKNLLKGGDLISPHPDQDISILPLIPLRQQQQPILGVRISVMGQTPQPTQALLDTGADLTVIPQTLVPGPVKLHDTLILGASGQTNTQFKLLQTPLHIFLPFRRSPVILSSCLLDTHNKWTIIGRDALQQCQGLLYLPDDPSPHQLLPIATPNTIGLEHLPPPPQVDQFPLNLPERLQALNDLVSKALEAGHIEPYSGPGNNPVFPVKKPNGKWRFIHDLRATNAITTTLTSPSPGPPDLTSLPTALPHLQTIDLTDAFFQIPLPKQYQPYFAFTIPQPCNYGPGTRYAWTVLPQGFKNSPTLFEQQLAAVLNPMRKMFPTSTIVQYMDDILLASPTNEELQQLSQLTLQALTTHGLPISQEKTQQTPGQIRFLGQVISPNHITYESTPTIPIKSQWTLTELQVILGEIQWVSKGTPILRKHLQSLYSALHGYRDPRACITLTPQQLHALHAIQQALQHNCRGRLNPALPLLGLISLSTSGTTSVIFQPKQNWPLAWLHTPHPPTSLCPWGHLLACTILTLDKYTLQHYGQLCQSFHHNMSKQALCDFLRNSPHPSVGILIHHMGRFHNLGSQPSGPWKTLLHLPTLLQEPRLLRPIFTLSPVVLDTAPCLFSDGSPQKAAYVLWDQTILQQDITPLPSHETHSAQKGELLALICGLRAAKPWPSLNIFLDSKYLIKYLHSLAIGAFLGTSAHQTLQAALPPLLQGKTIYLHHVRSHTNLPDPISTFNEYTDSLILAPLVPLTPQGLHGLTHCNQRALVSFGATPREAKSLVQTCHTCQTINSQHHMPRGYIRRGLLPNHIWQGDVTHYKYKKYKYCLHVWVDTFSGAVSVSCKKKETSCETISAVLQAISLLGKPLHINTDNGPAFLSQEFQEFCTSYRIKHSTHIPYNPTSSGLVERTNGVIKNLLNKYLLDCPNLPLDNAIHKALWTLNQLNVMNPSGKTRWQIHHSPPLPPIPEASTPPKPPPKWFYYKLPGLTNQRWKGPLQSLQEAAGAALLSIDGSPRWIPWRFLKKAACPRPDASELAEHAATDHQHHG.

The N-myristoyl glycine; by host moiety is linked to residue G2. Residues 94 to 97 carry the PTAP/PSAP motif motif; it reads PSAP. The disordered stretch occupies residues 94–121; it reads PSAPAAPVPTPICPTTTPPPPPPPSPEA. Pro residues predominate over residues 97–121; sequence PAAPVPTPICPTTTPPPPPPPSPEA. Positions 124 to 127 match the PPXY motif motif; the sequence is PPPY. A PTAP/PSAP motif motif is present at residues 130–133; it reads PTTT. 2 consecutive CCHC-type zinc fingers follow at residues 361–378 and 384–401; these read QPCF…DCTQ and GPCP…DCPQ. The segment at 399-425 is disordered; sequence CPQLKPPQEEGEPLLLDLPSTSGTTEE. A Peptidase A2 domain is found at 473–551; the sequence is TQALLDTGAD…NKWTIIGRDA (79 aa). D478 functions as the For protease activity; shared with dimeric partner in the catalytic mechanism. Positions 612 to 802 constitute a Reverse transcriptase domain; it reads LEAGHIEPYS…GQIRFLGQVI (191 aa). Mg(2+) contacts are provided by D678, D753, D754, D1038, E1073, D1095, D1156, D1229, and D1286. The RNase H type-1 domain occupies 1029–1164; sequence LDTAPCLFSD…TDSLILAPLV (136 aa). Residues 1218–1387 form the Integrase catalytic domain; it reads RGLLPNHIWQ…PPIPEASTPP (170 aa). Positions 1392–1441 form a DNA-binding region, integrase-type; that stretch reads KWFYYKLPGLTNQRWKGPLQSLQEAAGAALLSIDGSPRWIPWRFLKKAAC.

In terms of assembly, homodimer; the homodimers are part of the immature particles. Interacts with human TSG101 and NEDD4; these interactions are essential for budding and release of viral particles. Homodimer; further assembles as homohexamers. Mg(2+) is required as a cofactor. In terms of processing, phosphorylation of the matrix protein p19 by MAPK1 seems to play a role in budding. Myristoylated. Myristoylation of the matrix (MA) domain mediates the transport and binding of Gag polyproteins to the host plasma membrane and is required for the assembly of viral particles. Post-translationally, specific enzymatic cleavages by the viral protease yield mature proteins. The polyprotein is cleaved during and after budding, this process is termed maturation. The protease is autoproteolytically processed at its N- and C-termini.

The protein resides in the virion. The catalysed reaction is Endonucleolytic cleavage to 5'-phosphomonoester.. It catalyses the reaction DNA(n) + a 2'-deoxyribonucleoside 5'-triphosphate = DNA(n+1) + diphosphate. Functionally, the matrix domain targets Gag, Gag-Pro and Gag-Pro-Pol polyproteins to the plasma membrane via a multipartite membrane binding signal, that includes its myristoylated N-terminus. In terms of biological role, matrix protein. Forms the spherical core of the virus that encapsulates the genomic RNA-nucleocapsid complex. Its function is as follows. Binds strongly to viral nucleic acids and promote their aggregation. Also destabilizes the nucleic acids duplexes via highly structured zinc-binding motifs. Functionally, the aspartyl protease mediates proteolytic cleavages of Gag and Gag-Pol polyproteins during or shortly after the release of the virion from the plasma membrane. Cleavages take place as an ordered, step-wise cascade to yield mature proteins. This process is called maturation. Displays maximal activity during the budding process just prior to particle release from the cell (Potential). Cleaves the translation initiation factor eIF4G leading to the inhibition of host cap-dependent translation. In terms of biological role, RT is a multifunctional enzyme that converts the viral RNA genome into dsDNA in the cytoplasm, shortly after virus entry into the cell. This enzyme displays a DNA polymerase activity that can copy either DNA or RNA templates, and a ribonuclease H (RNase H) activity that cleaves the RNA strand of RNA-DNA heteroduplexes in a partially processive 3' to 5'-endonucleasic mode. Conversion of viral genomic RNA into dsDNA requires many steps. A tRNA-Pro binds to the primer-binding site (PBS) situated at the 5'-end of the viral RNA. RT uses the 3' end of the tRNA primer to perform a short round of RNA-dependent minus-strand DNA synthesis. The reading proceeds through the U5 region and ends after the repeated (R) region which is present at both ends of viral RNA. The portion of the RNA-DNA heteroduplex is digested by the RNase H, resulting in a ssDNA product attached to the tRNA primer. This ssDNA/tRNA hybridizes with the identical R region situated at the 3' end of viral RNA. This template exchange, known as minus-strand DNA strong stop transfer, can be either intra- or intermolecular. RT uses the 3' end of this newly synthesized short ssDNA to perform the RNA-dependent minus-strand DNA synthesis of the whole template. RNase H digests the RNA template except for a polypurine tract (PPT) situated at the 5' end of the genome. It is not clear if both polymerase and RNase H activities are simultaneous. RNase H probably can proceed both in a polymerase-dependent (RNA cut into small fragments by the same RT performing DNA synthesis) and a polymerase-independent mode (cleavage of remaining RNA fragments by free RTs). Secondly, RT performs DNA-directed plus-strand DNA synthesis using the PPT that has not been removed by RNase H as primer. PPT and tRNA primers are then removed by RNase H. The 3' and 5' ssDNA PBS regions hybridize to form a circular dsDNA intermediate. Strand displacement synthesis by RT to the PBS and PPT ends produces a blunt ended, linear dsDNA copy of the viral genome that includes long terminal repeats (LTRs) at both ends. Catalyzes viral DNA integration into the host chromosome, by performing a series of DNA cutting and joining reactions. The sequence is that of Gag-Pro-Pol polyprotein (gag-pro-pol) from Human T-cell leukemia virus 2 (HTLV-2).